A 291-amino-acid chain; its full sequence is 3-hydroxy-5-phosphonooxypentane-2,4-dione thiolase (291 aa).

The active-site Schiff-base intermediate with substrate is lysine 203.

Belongs to the DeoC/FbaB aldolase family. Homodecamer.

The protein resides in the cytoplasm. It catalyses the reaction dihydroxyacetone phosphate + acetyl-CoA = 3-hydroxy-2,4-dioxopentyl phosphate + CoA. In terms of biological role, involved in the degradation of phospho-AI-2, thereby terminating induction of the lsr operon and closing the AI-2 signaling cycle. Catalyzes the transfer of an acetyl moiety from 3-hydroxy-5-phosphonooxypentane-2,4-dione to CoA to form glycerone phosphate and acetyl-CoA. This is 3-hydroxy-5-phosphonooxypentane-2,4-dione thiolase from Photorhabdus laumondii subsp. laumondii (strain DSM 15139 / CIP 105565 / TT01) (Photorhabdus luminescens subsp. laumondii).